Consider the following 213-residue polypeptide: Ripening-related protein 3 (213 aa).

The N-terminal stretch at 1–32 is a signal peptide; sequence MAGAMTMSRRRLSHALLLVLAILPNLAALAVA.

Belongs to the kiwellin family.

The protein localises to the secreted. This Oryza sativa subsp. japonica (Rice) protein is Ripening-related protein 3.